The following is a 298-amino-acid chain: 3-hydroxyisobutyrate dehydrogenase (298 aa).

Residues 2 to 30 (TDIA…VNVF), 65 to 66 (LP), and Thr-96 each bind NAD(+). Lys-171 is an active-site residue. Lys-246 contacts NAD(+).

Belongs to the HIBADH-related family.

It carries out the reaction 3-hydroxy-2-methylpropanoate + NAD(+) = 2-methyl-3-oxopropanoate + NADH + H(+). It functions in the pathway amino-acid degradation; L-valine degradation. The sequence is that of 3-hydroxyisobutyrate dehydrogenase from Pseudomonas aeruginosa (strain ATCC 15692 / DSM 22644 / CIP 104116 / JCM 14847 / LMG 12228 / 1C / PRS 101 / PAO1).